We begin with the raw amino-acid sequence, 67 residues long: Conotoxin AbVIO (67 aa).

The signal sequence occupies residues 1 to 17; it reads VIIIAVLFLTACQLIAT. Residues 18–40 constitute a propeptide that is removed on maturation; the sequence is ASYARSERKHPDLRLSSRNSKLS. Cystine bridges form between cysteine 43-cysteine 57, cysteine 50-cysteine 61, and cysteine 56-cysteine 66.

The protein belongs to the conotoxin O1 superfamily. As to expression, expressed by the venom duct.

It is found in the secreted. This chain is Conotoxin AbVIO, found in Conus abbreviatus (Abbreviated cone).